The primary structure comprises 364 residues: Dual-specificity RNA methyltransferase RlmN (364 aa).

The Proton acceptor role is filled by glutamate 91. Residues 97 to 333 form the Radical SAM core domain; it reads ESDRGTLCIS…VTVRKTRGDD (237 aa). Cysteines 104 and 338 form a disulfide. Cysteine 111, cysteine 115, and cysteine 118 together coordinate [4Fe-4S] cluster. Residues 164-165, serine 196, 218-220, and asparagine 295 contribute to the S-adenosyl-L-methionine site; these read GE and SLH. The active-site S-methylcysteine intermediate is the cysteine 338.

The protein belongs to the radical SAM superfamily. RlmN family. The cofactor is [4Fe-4S] cluster.

The protein resides in the cytoplasm. The enzyme catalyses adenosine(2503) in 23S rRNA + 2 reduced [2Fe-2S]-[ferredoxin] + 2 S-adenosyl-L-methionine = 2-methyladenosine(2503) in 23S rRNA + 5'-deoxyadenosine + L-methionine + 2 oxidized [2Fe-2S]-[ferredoxin] + S-adenosyl-L-homocysteine. It catalyses the reaction adenosine(37) in tRNA + 2 reduced [2Fe-2S]-[ferredoxin] + 2 S-adenosyl-L-methionine = 2-methyladenosine(37) in tRNA + 5'-deoxyadenosine + L-methionine + 2 oxidized [2Fe-2S]-[ferredoxin] + S-adenosyl-L-homocysteine. In terms of biological role, specifically methylates position 2 of adenine 2503 in 23S rRNA and position 2 of adenine 37 in tRNAs. m2A2503 modification seems to play a crucial role in the proofreading step occurring at the peptidyl transferase center and thus would serve to optimize ribosomal fidelity. This is Dual-specificity RNA methyltransferase RlmN from Neisseria meningitidis serogroup C / serotype 2a (strain ATCC 700532 / DSM 15464 / FAM18).